Consider the following 568-residue polypeptide: Methyl-accepting chemotaxis protein CtpH (568 aa).

The Cytoplasmic portion of the chain corresponds to 1-39 (MPASPGHRDVLGCLVAACVPVQPGNPSRRSMLQQSLRAQ). A helical membrane pass occupies residues 40-60 (ILVLLGGSLAALLLIALACFG). Residues 61 to 216 (SLTGDVRAYR…ISAEARRTML (156 aa)) lie on the Periplasmic side of the membrane. Residues 217–237 (LGSLVLIGASLAVALLSLWLV) form a helical membrane-spanning segment. Residues 238–568 (NRNLVRPVQR…LGDALQRLRA (331 aa)) are Cytoplasmic-facing. An HAMP domain is found at 239–291 (RNLVRPVQRLIEHIAQLSHGDFGERIEIRRKDELGKLALAANTLRDFLVDIFD). A Methyl-accepting transducer domain is found at 296–532 (STRDLDSASG…EISRNLTEIA (237 aa)).

This sequence belongs to the methyl-accepting chemotaxis (MCP) protein family.

Its subcellular location is the cell inner membrane. Functionally, chemotactic-signal transducers respond to changes in the concentration of attractants and repellents in the environment, transduce a signal from the outside to the inside of the cell, and facilitate sensory adaptation through the variation of the level of methylation. Chemoreceptor for inorganic phosphate, which is required for taxis at high concentrations of phosphate. Recognizes inorganic phosphate directly. Can also bind to other components that have a pyrophosphate group, including ATP and ADP. The protein is Methyl-accepting chemotaxis protein CtpH of Pseudomonas aeruginosa (strain ATCC 15692 / DSM 22644 / CIP 104116 / JCM 14847 / LMG 12228 / 1C / PRS 101 / PAO1).